Consider the following 200-residue polypeptide: MAKFTQHTGLVVPLDAANVDTDAIIPKQFLQKVTRTGFGQHLFHDWRFLDDAGQQPNPEFVLNKPHYKGASILLARENFGCGSSREHAPWALTDYGFSVVIAPSFADIFYGNSFNNQLLPVKLSDEEVDELFKLVDEQEGITFTVDLENQVVQADSKRYPFEIDSFRRHCMINGLDSIGLTLQHEASITEYEKNQPAFLN.

It belongs to the LeuD family. LeuD type 1 subfamily. Heterodimer of LeuC and LeuD.

It catalyses the reaction (2R,3S)-3-isopropylmalate = (2S)-2-isopropylmalate. It participates in amino-acid biosynthesis; L-leucine biosynthesis; L-leucine from 3-methyl-2-oxobutanoate: step 2/4. Its function is as follows. Catalyzes the isomerization between 2-isopropylmalate and 3-isopropylmalate, via the formation of 2-isopropylmaleate. The sequence is that of 3-isopropylmalate dehydratase small subunit from Pectobacterium atrosepticum (strain SCRI 1043 / ATCC BAA-672) (Erwinia carotovora subsp. atroseptica).